The primary structure comprises 310 residues: Glucan endo-1,3-beta-glucosidase GI (310 aa).

Glutamate 96 serves as the catalytic Proton donor. Glutamate 234 acts as the Nucleophile in catalysis.

Belongs to the glycosyl hydrolase 17 family. In terms of assembly, monomer. In terms of tissue distribution, young leaves and roots.

It carries out the reaction Hydrolysis of (1-&gt;3)-beta-D-glucosidic linkages in (1-&gt;3)-beta-D-glucans.. Functionally, may provide a degree of protection against microbial invasion of germinated barley grain through its ability to degrade fungal cell wall polysaccharides. Does not hydrolyze (1,3;1,4)-beta-D-glucans, (1,6)-beta-D-glucan, CM-cellulose, insoluble (1,3)-beta-D-glucans or aryl beta-D-glycosides. In Hordeum vulgare (Barley), this protein is Glucan endo-1,3-beta-glucosidase GI.